The primary structure comprises 119 residues: Putative yippee-like protein Os10g0369500 (119 aa).

A Yippee domain is found at 21 to 118; the sequence is AVLKCRRCRV…LEKARMWKEA (98 aa). Zn(2+)-binding residues include Cys25, Cys28, Cys81, and Cys84.

The protein belongs to the yippee family.

This Oryza sativa subsp. japonica (Rice) protein is Putative yippee-like protein Os10g0369500.